The primary structure comprises 1306 residues: Synergin gamma (1306 aa).

Residues Met113 to Ser153 adopt a coiled-coil conformation. Disordered regions lie at residues Gly176–Pro196 and Ser252–Ser285. Basic and acidic residues predominate over residues Glu258–Ser272. The region spanning Asn293–Pro404 is the EH domain. A DFXDF motif 1 motif is present at residues Asp455–Phe459. The interval Gln460 to Pro494 is disordered. A Phosphoserine modification is found at Ser471. Lys509 bears the N6-acetyllysine mark. The interval Lys514–Ser778 is interaction with AP1G1. Residues Ser559 to Gln601 form a disordered region. Ser576 is modified (phosphoserine). The interaction with AP1G1, AP1G2 and GGA1 stretch occupies residues Leu661–Glu673. The DFXDF motif 2 signature appears at Asp685 to Phe689. The segment at Ile697–Pro730 is disordered. Residues Lys702–Val714 are compositionally biased toward basic and acidic residues. Ser715 carries the phosphoserine modification. The residue at position 736 (Lys736) is an N6-acetyllysine. Phosphoserine is present on residues Ser744 and Ser764. Residues Asp767–Phe771 carry the DFXDF motif 3 motif. Phosphoserine is present on residues Ser804, Ser844, Ser847, Ser901, Ser911, Ser927, Ser974, Ser998, Ser1065, Ser1067, Ser1079, and Ser1090. Disordered regions lie at residues Pro986–Phe1016 and Ser1065–Ser1090. Residues Glu993–Ser1005 are compositionally biased toward polar residues. Thr1092 bears the Phosphothreonine mark.

As to quaternary structure, self-associates. Interacts with GGA1 (via GAE domain). Interacts with GGA2 and GGA3. Interacts with AP1G1 (via GAE domain), a subunit of adapter protein complex AP-1. Interacts with AP1G2 (via GAE domain) a subunit of adapter protein complex AP-1. Component of the aftiphilin/p200/gamma-synergin complex, at least composed of AFTPH/aftiphilin, HEATR5B/p200a and SYNRG/gamma-synergin, which plays a role in the AP1G1/AP-1-mediated trafficking of transferrin from early to recycling endosomes. Within the complex interacts with AFTPH/aftiphilin and HEATR5B/p200a; the interactions are direct. Interacts (via EH domain) with SCAMP1.

The protein resides in the cytoplasm. It localises to the cytosol. Its subcellular location is the golgi apparatus. It is found in the trans-Golgi network membrane. The protein localises to the perinuclear region. The protein resides in the cytoplasmic vesicle. It localises to the clathrin-coated vesicle. In terms of biological role, plays a role in endocytosis and/or membrane trafficking at the trans-Golgi network (TGN). May act by linking the adapter protein complex AP-1 to other proteins. Component of clathrin-coated vesicles. Component of the aftiphilin/p200/gamma-synergin complex, which plays roles in AP1G1/AP-1-mediated protein trafficking including the trafficking of transferrin from early to recycling endosomes, and the membrane trafficking of furin and the lysosomal enzyme cathepsin D between the trans-Golgi network (TGN) and endosomes. The sequence is that of Synergin gamma (Synrg) from Mus musculus (Mouse).